We begin with the raw amino-acid sequence, 329 residues long: Cytosolic arginine sensor for mTORC1 subunit 1 (329 aa).

Serine 14 carries the phosphoserine; by PKB/AKT1 modification. 2 ACT domains span residues 72-138 (AEAT…HTLA) and 260-321 (GELW…EVLQ). L-arginine-binding positions include 111–112 (SV), glycine 274, 280–281 (IV), and 300–304 (TFNFD).

This sequence belongs to the GATS family. In terms of assembly, forms homodimers and heterodimers with CASTOR2. Interacts with the GATOR2 complex which is composed of MIOS, SEC13, SEH1L, WDR24 and WDR59; the interaction is negatively regulated by arginine. Interacts with TM4SF5; the interaction is positively regulated by leucine and is negatively regulated by arginine. Phosphorylation at Ser-14 by AKT1, promoting the interaction between CASTOR1 and RNF167. Post-translationally, ubiquitinated by RNF167 via 'Lys-29'-polyubiquitination, leading to its degradation, releasing the GATOR2 complex. Ubiquitination by RNF167 is promoted by phosphorylation at Ser-14 by AKT1. In terms of tissue distribution, widely expressed.

The protein resides in the cytoplasm. Its subcellular location is the cytosol. Functions as an intracellular arginine sensor within the amino acid-sensing branch of the TORC1 signaling pathway. As a homodimer or a heterodimer with CASTOR2, binds and inhibits the GATOR subcomplex GATOR2 and thereby mTORC1. Binding of arginine to CASTOR1 allosterically disrupts the interaction of CASTOR1-containing dimers with GATOR2 which can in turn activate mTORC1 and the TORC1 signaling pathway. The chain is Cytosolic arginine sensor for mTORC1 subunit 1 from Homo sapiens (Human).